The sequence spans 260 residues: 5'-nucleotidase SurE (260 aa).

Positions 8, 9, 39, and 91 each coordinate a divalent metal cation.

The protein belongs to the SurE nucleotidase family. A divalent metal cation serves as cofactor.

The protein resides in the cytoplasm. The catalysed reaction is a ribonucleoside 5'-phosphate + H2O = a ribonucleoside + phosphate. Its function is as follows. Nucleotidase that shows phosphatase activity on nucleoside 5'-monophosphates. This chain is 5'-nucleotidase SurE, found in Acidovorax ebreus (strain TPSY) (Diaphorobacter sp. (strain TPSY)).